We begin with the raw amino-acid sequence, 326 residues long: Triacylglycerol lipase 2 (326 aa).

The (A/G)XSXG lipase motif signature appears at 142–146; sequence AHSMG.

In terms of assembly, interacts with MIA40; forms mixed disulfide intermediates with MIA40.

The protein resides in the mitochondrion. The protein localises to the mitochondrion intermembrane space. It carries out the reaction a triacylglycerol + H2O = a diacylglycerol + a fatty acid + H(+). It catalyses the reaction 1,2,3-tri-(9Z-octadecenoyl)-glycerol + H2O = di-(9Z)-octadecenoylglycerol + (9Z)-octadecenoate + H(+). The catalysed reaction is 1,2,3-tributanoylglycerol + H2O = dibutanoylglycerol + butanoate + H(+). The enzyme catalyses 1,2,3-trioctanoylglycerol + H2O = dioctanoylglycerol + octanoate + H(+). It carries out the reaction di-(9Z)-octadecenoylglycerol + H2O = (9Z-octadecenoyl)-glycerol + (9Z)-octadecenoate + H(+). It catalyses the reaction dioctanoylglycerol + H2O = octanoylglycerol + octanoate + H(+). Mitochondrial triacylglycerol (TAG) lipase with activity toward long-chain diacylglycerols (DAGs) and triacylglycerols (TAGs). Involved in mitochondrial lipid metabolism. The polypeptide is Triacylglycerol lipase 2 (TGL2) (Saccharomyces cerevisiae (strain ATCC 204508 / S288c) (Baker's yeast)).